The primary structure comprises 252 residues: Probable transcriptional regulatory protein CE1776 (252 aa).

A disordered region spans residues 1-22 (MAGHSKWATTKHKKAANDAKRG).

The protein belongs to the TACO1 family.

The protein localises to the cytoplasm. The sequence is that of Probable transcriptional regulatory protein CE1776 from Corynebacterium efficiens (strain DSM 44549 / YS-314 / AJ 12310 / JCM 11189 / NBRC 100395).